Consider the following 284-residue polypeptide: Methylglyoxal reductase YeaE (284 aa).

The protein belongs to the aldo/keto reductase family.

It carries out the reaction hydroxyacetone + NADP(+) = methylglyoxal + NADPH + H(+). It catalyses the reaction a primary alcohol + NADP(+) = an aldehyde + NADPH + H(+). Its function is as follows. Aldo-keto reductase that contributes to cellular methylglyoxal detoxification by catalyzing the NADPH-dependent conversion of methylglyoxal to acetol. It also exhibits activity with glyoxal and probably plays a significant role in detoxification of glyoxal in vivo. Can also use aromatic aldehydes such as 4-nitrobenzaldehyde, 3-nitrobenzaldehyde and benzaldehyde, and phenylglyoxal. This is Methylglyoxal reductase YeaE (yeaE) from Escherichia coli (strain K12).